Here is a 516-residue protein sequence, read N- to C-terminus: Methionine--tRNA ligase (516 aa).

Residues 13-23 carry the 'HIGH' region motif; that stretch reads FYPNGKPHIGH. Positions 299–303 match the 'KMSKS' region motif; sequence KMSKS. Residue Lys302 participates in ATP binding.

It belongs to the class-I aminoacyl-tRNA synthetase family. MetG type 2B subfamily. Monomer.

The protein localises to the cytoplasm. It carries out the reaction tRNA(Met) + L-methionine + ATP = L-methionyl-tRNA(Met) + AMP + diphosphate. Is required not only for elongation of protein synthesis but also for the initiation of all mRNA translation through initiator tRNA(fMet) aminoacylation. This Mesorhizobium japonicum (strain LMG 29417 / CECT 9101 / MAFF 303099) (Mesorhizobium loti (strain MAFF 303099)) protein is Methionine--tRNA ligase.